The primary structure comprises 526 residues: Glucose-6-phosphate isomerase (526 aa).

The active-site Proton donor is glutamate 320. Active-site residues include histidine 349 and lysine 453.

This sequence belongs to the GPI family.

The protein localises to the cytoplasm. It catalyses the reaction alpha-D-glucose 6-phosphate = beta-D-fructose 6-phosphate. The protein operates within carbohydrate biosynthesis; gluconeogenesis. It functions in the pathway carbohydrate degradation; glycolysis; D-glyceraldehyde 3-phosphate and glycerone phosphate from D-glucose: step 2/4. Catalyzes the reversible isomerization of glucose-6-phosphate to fructose-6-phosphate. The sequence is that of Glucose-6-phosphate isomerase from Rippkaea orientalis (strain PCC 8801 / RF-1) (Cyanothece sp. (strain PCC 8801)).